The chain runs to 673 residues: MGNVQSEPSAGGGSRKEQASDRASDSRRTPLVEPEVTPSSPAMRLARGLGVWFPGSSGPPGLLIPPEPQASSSPLPLTLELPSPVTPPPEEAAAVSTPPPPPVGTLLPAPSKWRKPTGTSVPRIRGLLEASHRGQGDPPSLRPLPPLPRQLTEKDPVLRAPAPPPTPLEPRKQLPPAPSTCDPQPLSRRITLASSATSPTESQVRHSSEGQAAGGAHGGVPPQAGEGEMARSATSESGLSLLCKVTFKSGPHLSPTSASGPLAAKASPGAGGGGLFASSGAISYAEVLKQGPQPPGATRPLGEVPPGATRPLGEVPRAAQETEGGDGDGEGCSGPPSVPAPLARALPPPPYTTFPGSKPKFDWVSPPDGTERHFRFNGAVGGIGAPRRRTTTLSGPWGSPPPRSGQTHPSSGPRRPTPALLAPPMFIFPAPNNGEPVRPVPPSPQQIPPLPPPPPTPPATPPPAPPPTPQPPALPRTPILVARPPTPGPGHLESALAPTPPSTLSPTAAADQVPAATPATVTSQVPATATAELSPPMPQPKTRTRRNKGPRAARGVIREEGTSGDGPREPNTAPVTDSSSGGGGGGSNGTSTAGASNKGTARHWPPFEVLNSCPCKCYCRHQRRHRRLPRNVSAWLSTPTNHLSEPPWVATVKLAGSLVAGLEHYDLQATHST.

The segment at methionine 1–glycine 599 is disordered. A compositionally biased stretch (basic and acidic residues) spans serine 14 to proline 30. Residues alanine 70–serine 83 are compositionally biased toward low complexity. An interaction with GGNBP1 region spans residues arginine 125–proline 506. The span at proline 161 to proline 178 shows a compositional bias: pro residues. The span at leucine 192–serine 202 shows a compositional bias: polar residues. A compositionally biased stretch (low complexity) spans serine 257–proline 268. Serine 399 is subject to Phosphoserine. Residues proline 413 to proline 424 are compositionally biased toward low complexity. Residues arginine 438 to proline 475 show a composition bias toward pro residues. Positions leucine 504 to alanine 531 are enriched in low complexity. An interactions with ZNF403/GGNBP2 and OAZ3 region spans residues aspartate 511–threonine 673. Residues threonine 542–arginine 551 are compositionally biased toward basic residues.

Isoform 1 and isoform 3 interact with FANCL. Isoform 1 interacts with GGNBP1, ZNF403/GGNBP2 and OAZ3. Isoform 2 interacts with GGNBP1. As to expression, testis-specific. Specifically expressed in the germ cells and not in the somatic, Sertoli, or Leydig cells. In adult testis, expression starts in stage VIII pachytene spermatocytes, increases in stage IX and X pachytene spermatocytes, and culminates in stage XI diplotene spermatocytes and the meiotic cells in stage XII. Expression decreases slightly in step 1-3 spermatids, further decreases in step 4-11 spermatids, and is no longer detectable in step 12 spermatids and beyond. Isoform 2 is mainly expressed in testis.

Its subcellular location is the cytoplasm. It localises to the perinuclear region. The protein localises to the cytoplasmic vesicle. It is found in the nucleus. The protein resides in the nucleolus. May be involved in spermatogenesis. This Mus musculus (Mouse) protein is Gametogenetin (Ggn).